The sequence spans 338 residues: DNA-directed RNA polymerase subunit alpha (338 aa).

Residues 1–234 (MIERNWNELI…DQLQIFITFE (234 aa)) form an alpha N-terminal domain (alpha-NTD) region. Residues 250-338 (FNPALLKKVD…DLAKKFEDQI (89 aa)) are alpha C-terminal domain (alpha-CTD).

Belongs to the RNA polymerase alpha chain family. In terms of assembly, homodimer. The RNAP catalytic core consists of 2 alpha, 1 beta, 1 beta' and 1 omega subunit. When a sigma factor is associated with the core the holoenzyme is formed, which can initiate transcription.

The catalysed reaction is RNA(n) + a ribonucleoside 5'-triphosphate = RNA(n+1) + diphosphate. In terms of biological role, DNA-dependent RNA polymerase catalyzes the transcription of DNA into RNA using the four ribonucleoside triphosphates as substrates. The protein is DNA-directed RNA polymerase subunit alpha of Caulobacter vibrioides (strain ATCC 19089 / CIP 103742 / CB 15) (Caulobacter crescentus).